Reading from the N-terminus, the 421-residue chain is UDP-N-acetylglucosamine 1-carboxyvinyltransferase (421 aa).

Phosphoenolpyruvate is bound at residue 22 to 23 (KN). Arginine 93 is a binding site for UDP-N-acetyl-alpha-D-glucosamine. Cysteine 117 (proton donor) is an active-site residue. Cysteine 117 carries the post-translational modification 2-(S-cysteinyl)pyruvic acid O-phosphothioketal. UDP-N-acetyl-alpha-D-glucosamine contacts are provided by residues 122–126 (RPVDL), aspartate 308, and valine 330.

This sequence belongs to the EPSP synthase family. MurA subfamily.

The protein resides in the cytoplasm. It carries out the reaction phosphoenolpyruvate + UDP-N-acetyl-alpha-D-glucosamine = UDP-N-acetyl-3-O-(1-carboxyvinyl)-alpha-D-glucosamine + phosphate. Its pathway is cell wall biogenesis; peptidoglycan biosynthesis. Its function is as follows. Cell wall formation. Adds enolpyruvyl to UDP-N-acetylglucosamine. In Ectopseudomonas mendocina (strain ymp) (Pseudomonas mendocina), this protein is UDP-N-acetylglucosamine 1-carboxyvinyltransferase.